The following is a 207-amino-acid chain: Large ribosomal subunit protein uL4 (207 aa).

The segment at 49–75 is disordered; it reads HAVKNRSAVSGGGRKPWKQKGTGRARA.

The protein belongs to the universal ribosomal protein uL4 family. In terms of assembly, part of the 50S ribosomal subunit.

In terms of biological role, one of the primary rRNA binding proteins, this protein initially binds near the 5'-end of the 23S rRNA. It is important during the early stages of 50S assembly. It makes multiple contacts with different domains of the 23S rRNA in the assembled 50S subunit and ribosome. Forms part of the polypeptide exit tunnel. The polypeptide is Large ribosomal subunit protein uL4 (Leuconostoc mesenteroides subsp. mesenteroides (strain ATCC 8293 / DSM 20343 / BCRC 11652 / CCM 1803 / JCM 6124 / NCDO 523 / NBRC 100496 / NCIMB 8023 / NCTC 12954 / NRRL B-1118 / 37Y)).